The primary structure comprises 476 residues: MVLNRYSLITNCNHKTLGLYYLWFSFLFGSYGFLLSVILRTELYSSSLRIIAQENVNLYNMIFTIHGIIMIFFNIMPGLFGGFGNYFLPILCGSPELAYPRINSISLLLQPIAFVLVILSTAAEFGGGTGWTLYPPLSTSLMSLSPVAVDVIIFGLLVSGVASIMSSLNFITTVMHLRAKGLTLGILSVSTWSLIITSGMLLLTLPVLTGGVLMLLSDLHFNTLFFDPTFAGDPILYQHLFWFFGHPEVYILILPAFGVISHVISTNYCRNLFGNQSMILAMGCIAVLGSLVWVHHMYTTGLEVDTRAYFTSTTILISIPTGTKVFNWICTYMSSNFGMIHSSSLLSLLFICTFTFGGTTGVILGNAAIDVALHDTYYVIAHFHFVLSIGAIIGLFTTVSAFQDNFFGKNLRENSIVILWSMLFFVGVILTFLPMHFLGFNVMPRRIPDYPDALNGWNMICSIGSTMTLFGLLIFK.

A helical transmembrane segment spans residues 19 to 39; sequence LYYLWFSFLFGSYGFLLSVIL. Glu-42 is a binding site for Ca(2+). The next 8 membrane-spanning stretches (helical) occupy residues 61–81, 105–125, 151–171, 194–214, 240–260, 278–298, 310–330, and 345–365; these read MIFT…GLFG, ISLL…AAEF, VIIF…LNFI, LIIT…GVLM, LFWF…FGVI, MILA…HHMY, FTST…NWIC, and LLSL…VILG. His-66 is a Fe(II)-heme a binding site. His-246 serves as a coordination point for Cu cation. A cross-link (1'-histidyl-3'-tyrosine (His-Tyr)) is located at residues 246–250; that stretch reads HPEVY. Tyr-250 lines the O2 pocket. 2 residues coordinate Cu cation: His-295 and His-296. Positions 374 and 375 each coordinate Mg(2+). A run of 2 helical transmembrane segments spans residues 379–399 and 415–435; these read VIAH…FTTV and SIVI…FLPM. His-382 lines the heme a3 pocket. His-384 provides a ligand contact to Fe(II)-heme a. Pro-448 contributes to the Ca(2+) binding site. Residues 455 to 475 traverse the membrane as a helical segment; sequence NGWNMICSIGSTMTLFGLLIF.

It belongs to the heme-copper respiratory oxidase family. As to quaternary structure, component of the cytochrome c oxidase (complex IV, CIV), a multisubunit enzyme composed of a catalytic core of 3 subunits and several supernumerary subunits. The complex exists as a monomer or a dimer and forms supercomplexes (SCs) in the inner mitochondrial membrane with ubiquinol-cytochrome c oxidoreductase (cytochrome b-c1 complex, complex III, CIII). It depends on heme as a cofactor. The cofactor is Cu cation.

Its subcellular location is the mitochondrion inner membrane. It catalyses the reaction 4 Fe(II)-[cytochrome c] + O2 + 8 H(+)(in) = 4 Fe(III)-[cytochrome c] + 2 H2O + 4 H(+)(out). It functions in the pathway energy metabolism; oxidative phosphorylation. Functionally, component of the cytochrome c oxidase, the last enzyme in the mitochondrial electron transport chain which drives oxidative phosphorylation. The respiratory chain contains 3 multisubunit complexes succinate dehydrogenase (complex II, CII), ubiquinol-cytochrome c oxidoreductase (cytochrome b-c1 complex, complex III, CIII) and cytochrome c oxidase (complex IV, CIV), that cooperate to transfer electrons derived from NADH and succinate to molecular oxygen, creating an electrochemical gradient over the inner membrane that drives transmembrane transport and the ATP synthase. Cytochrome c oxidase is the component of the respiratory chain that catalyzes the reduction of oxygen to water. Electrons originating from reduced cytochrome c in the intermembrane space (IMS) are transferred via the dinuclear copper A center (CU(A)) of subunit 2 and heme A of subunit 1 to the active site in subunit 1, a binuclear center (BNC) formed by heme A3 and copper B (CU(B)). The BNC reduces molecular oxygen to 2 water molecules using 4 electrons from cytochrome c in the IMS and 4 protons from the mitochondrial matrix. This chain is Cytochrome c oxidase subunit 1 (MT-CO1), found in Plasmodium falciparum.